Consider the following 286-residue polypeptide: Aminoglycoside N(3)-acetyltransferase III (286 aa).

Belongs to the antibiotic N-acetyltransferase family.

It catalyses the reaction a 2-deoxystreptamine antibiotic + acetyl-CoA = an N(3)-acetyl-2-deoxystreptamine antibiotic + CoA + H(+). Its function is as follows. Resistance to antibiotics containing the 2-deoxy-streptamine ring including gentamicin, kanamycin, tobramycin, neomycin and apramycin. The polypeptide is Aminoglycoside N(3)-acetyltransferase III (aacC3) (Salmonella sp).